The sequence spans 345 residues: uncharacterized protein (345 aa).

This is an uncharacterized protein from Archaeoglobus fulgidus (strain ATCC 49558 / DSM 4304 / JCM 9628 / NBRC 100126 / VC-16).